Consider the following 512-residue polypeptide: Protein arginine N-methyltransferase 2 (512 aa).

A disordered region spans residues 67-103 (TSNIDDLPLPPPIQEVEEEEPTQQNIEQQQQTQDESD). The span at 88 to 99 (TQQNIEQQQQTQ) shows a compositional bias: low complexity. Residues 120 to 508 (DEEYFSSYSK…KTNPFDYSYQ (389 aa)) form the SAM-dependent MTase PRMT-type domain. Residues His-133, Arg-142, Gly-166, and Glu-217 each coordinate S-adenosyl-L-methionine. Catalysis depends on residues Glu-231 and Glu-240. Residues 375-395 (DDDDNDNNNNNNDNSNDDENK) form a disordered region.

Belongs to the class I-like SAM-binding methyltransferase superfamily. Protein arginine N-methyltransferase family.

It localises to the cytoplasm. Its subcellular location is the nucleus. It carries out the reaction L-arginyl-[protein] + 2 S-adenosyl-L-methionine = N(omega),N(omega)-dimethyl-L-arginyl-[protein] + 2 S-adenosyl-L-homocysteine + 2 H(+). Functionally, arginine methyltransferase that methylates the guanidino nitrogens of arginyl residues in some proteins such as histones. This Dictyostelium discoideum (Social amoeba) protein is Protein arginine N-methyltransferase 2 (prmt2).